A 1153-amino-acid polypeptide reads, in one-letter code: MAHKVKASFQSLKTMPADYRFLGSPISDHLETNLITPPNGHLKNGVNGTASSVGGMDSVNEDSPYSVRSILNGERSSIGDGDSILPLPESNDRKWSDTNVYARKKVLQFWVQLPNGNWELGKIMSTSGEESVIVVTEGKVLKVKSETLVPANPDILDGVDDLMQLSYLNEPAVLYNLEYRYNQDMIYTKAGPVLVAVNPFKEVPLYGNRNIEAYRKRSNESPHVYAIADTAIREMIRDEVNQSIIISGESGAGKTETAKIAMQYLAALGGGSGIEYEILKTNPILEAFGNAKTLRNDNSSRFGKLIEIHFSETGKISGAQIQTFLLEKSRVVQCTEGERSYHIFYQLCAGASPTLREKLNLTSAKQYNYLKQSNCYSINGVDDAERFHAVKEALDIVHVSKEDQENVFAMLAAVLWLGNVSFTIIDNENHVEPEPDESLSTVAKLIGCNINELKLALSKRNMRVNNDTIVQKLTLSQAIDARDALAKSIYACLFDWLVEQINKSLAVGKRRTGRSISILDIYGFESFNKNSFEQFCINYANERLQQHFNRHLFKLEQEEYIQDGIDWTRVDFEDNQECLSLFEKKPLGLLSLLDEESTFPNGTDLTLANKLKQHLNDNSCFRGDRGKAFTVAHYAGEVTYETTGFLEKNRDLLHSDSIQLLSSCSCHLPQAFASSMLIYSEKPLVGPLHKAGGADSQRLSVATKFKGQLFQLMQRLGNTTPHFIRCIKPNNVQSAGLYEQGLVLQQLRCCGVLEVVRISRSGFPTRMFHHKFARRYGFLLLENIAAKDPLSVSVAILHQFNILPEMYQVGYTKLFFRTGQIGVLEDTRNRTLHGILRLQSYFRGHQARCRLKELKTGITILQSFVRGEKMRKEYTELLQRHRASAAIQSHVKRRIASQQYKATVDASAVIQSAIRGELVRRCAGDIGWLSSGGTKRNESDEVLVKASYLSDLQRRVLRTEAALREKEEENDILRQRVQQYDNRWSEYETKMKSMEEIWQKQMKSLQSSLSIAKKSLEVEDSARNSDASVNASDATDLDSGGSHYQMGHGRSRSVGVGLSVISRLAEEFGQRAQVFGDDRKFLMEVKSGQVEANLNPDRELRRLKQMFETWKKDYGGRLRETKLILSKLGSEETGGSAEKVKMNWWGRLRSTRY.

A Myosin N-terminal SH3-like domain is found at 104 to 153; it reads KKVLQFWVQLPNGNWELGKIMSTSGEESVIVVTEGKVLKVKSETLVPANP. Residues 157 to 829 enclose the Myosin motor domain; the sequence is DGVDDLMQLS…QIGVLEDTRN (673 aa). ATP-binding positions include 248–255 and 296–304; these read GESGAGKT and NDNSSRFGK. Actin-binding stretches follow at residues 581–615 and 709–731; these read LFEK…KQHL and LFQL…KPNN. IQ domains follow at residues 831-860, 854-883, and 903-932; these read TLHG…GITI, LKTG…RHRA, and TVDA…LSSG. Residues 948–996 adopt a coiled-coil conformation; that stretch reads YLSDLQRRVLRTEAALREKEEENDILRQRVQQYDNRWSEYETKMKSMEE. Residues 1020–1050 are disordered; the sequence is DSARNSDASVNASDATDLDSGGSHYQMGHGR. The span at 1024–1033 shows a compositional bias: polar residues; sequence NSDASVNASD.

This sequence belongs to the TRAFAC class myosin-kinesin ATPase superfamily. Myosin family. Plant myosin class VIII subfamily. Homodimer.

Functionally, myosin heavy chain that is required for the cell cycle-regulated transport of various organelles and proteins for their segregation. Functions by binding with its tail domain to receptor proteins on organelles and exerting force with its N-terminal motor domain against actin filaments, thereby transporting its cargo along polarized actin cables. In Arabidopsis thaliana (Mouse-ear cress), this protein is Myosin-3 (VIII-A).